The following is a 348-amino-acid chain: tRNA-specific 2-thiouridylase MnmA (348 aa).

ATP is bound by residues 8 to 15 and Met-34; that span reads LLSGGVDS. Residue Cys-105 is the Nucleophile of the active site. A disulfide bond links Cys-105 and Cys-197. Gly-129 is a binding site for ATP. Residues 147–149 are interaction with tRNA; the sequence is KDQ. The active-site Cysteine persulfide intermediate is the Cys-197.

It belongs to the MnmA/TRMU family.

Its subcellular location is the cytoplasm. It catalyses the reaction S-sulfanyl-L-cysteinyl-[protein] + uridine(34) in tRNA + AH2 + ATP = 2-thiouridine(34) in tRNA + L-cysteinyl-[protein] + A + AMP + diphosphate + H(+). In terms of biological role, catalyzes the 2-thiolation of uridine at the wobble position (U34) of tRNA, leading to the formation of s(2)U34. The polypeptide is tRNA-specific 2-thiouridylase MnmA (Fervidobacterium nodosum (strain ATCC 35602 / DSM 5306 / Rt17-B1)).